The sequence spans 545 residues: MSPNKRILRAVYLSLFFIGIFMLLDDFLFSRKASSFMNEEIKFDLNKDFDIDNSLIDEDFTFNLSDNSEDINVDTDIYHATFATFGGNLISLKLKNHLNLDKKPTEIVKVHPQNQSLFYITLDKLSKSLFLYEQIDSHVHDFKTNVEVNGKYYEYIKRYTFSKSNEYLIKLEIFLNNIDVNDDIGIDFYKFVLNSGIEELSAKGKLQYNNYLSHAIYYDTKLRYGKDGLNIANPKWVGAGTKYFEVLVSKENMKVEFKHENKVLNAFILNKLDNKNVSDVFYIYAGPRDNKYLDIFNQRELNSFGLSNVEFGMSVEKSLLYFLQVPMQLIMQIFYNVIPNWGLSIMFLTIVVRILIFPLTFKSFRATAELSKLQPKMKEIQVKFKSDPKRLNEEMGKLYREEGVNPIGGCFPILLQLPVFFALYGLVNNFFVLRGASFIPGWIDDLSIGDSIYYFGYKVFAWTDIRILPFIMMITQLLSTIVSSNVSFKSLGSQQKFLYFGMPIMFFFILYDMPSGLLIYWITTNIFTILQQYYIKMNLSERRNK.

A run of 6 helical transmembrane segments spans residues 10-30, 319-339, 341-361, 407-427, 467-487, and 502-522; these read AVYLSLFFIGIFMLLDDFLFS, LLYFLQVPMQLIMQIFYNVIP, WGLSIMFLTIVVRILIFPLTF, IGGCFPILLQLPVFFALYGLV, ILPFIMMITQLLSTIVSSNVS, and MPIMFFFILYDMPSGLLIYWI.

It belongs to the OXA1/ALB3/YidC family. Type 1 subfamily. Interacts with the Sec translocase complex via SecD. Specifically interacts with transmembrane segments of nascent integral membrane proteins during membrane integration.

The protein resides in the cell inner membrane. Its function is as follows. Required for the insertion and/or proper folding and/or complex formation of integral membrane proteins into the membrane. Involved in integration of membrane proteins that insert both dependently and independently of the Sec translocase complex, as well as at least some lipoproteins. Aids folding of multispanning membrane proteins. The sequence is that of Membrane protein insertase YidC from Borrelia recurrentis (strain A1).